A 461-amino-acid polypeptide reads, in one-letter code: Fumarate hydratase class II (461 aa).

Substrate-binding positions include 97–99, 127–130, 137–139, and Thr185; these read SGT, HPND, and SSN. Residue His186 is the Proton donor/acceptor of the active site. Residue Ser316 is part of the active site. Residues Ser317 and 322 to 324 contribute to the substrate site; that span reads KVN.

The protein belongs to the class-II fumarase/aspartase family. Fumarase subfamily. Homotetramer.

Its subcellular location is the cytoplasm. It carries out the reaction (S)-malate = fumarate + H2O. The protein operates within carbohydrate metabolism; tricarboxylic acid cycle; (S)-malate from fumarate: step 1/1. Functionally, involved in the TCA cycle. Catalyzes the stereospecific interconversion of fumarate to L-malate. This chain is Fumarate hydratase class II, found in Oceanobacillus iheyensis (strain DSM 14371 / CIP 107618 / JCM 11309 / KCTC 3954 / HTE831).